Here is an 826-residue protein sequence, read N- to C-terminus: Golgin subfamily A member 6-like protein 25 (826 aa).

Disordered stretches follow at residues 1 to 100 (MWPQ…HQEA), 297 to 327 (QEQEEKIREQEEKMRRQEEMMWEKEEKMRRQ), 345 to 425 (MHEQ…EMWR), 502 to 534 (QEEMWREEEKMHEQEKIWEEEKRQEQEDKMWRQ), 547 to 646 (RQEE…EQEE), and 658 to 826 (QEEM…MQEH). The span at 31–52 (MSKETRQSKLAEAKEQLTDHHP) shows a compositional bias: basic and acidic residues. Polar residues-rich tracts occupy residues 53–63 (QTNPSVGTAAS) and 71–83 (NNGTNPETTTSGG). Basic and acidic residues predominate over residues 86–100 (SPEDEQKASHQHQEA). Residues 157–822 (LEQALSAVAT…EVRLRQQEEK (666 aa)) are a coiled coil. Composition is skewed to basic and acidic residues over residues 658-678 (QEEMMQEQEEKMGEQEEKMWE) and 686-826 (QEEK…MQEH).

It belongs to the GOLGA6 family.

The protein is Golgin subfamily A member 6-like protein 25 of Homo sapiens (Human).